The following is an 868-amino-acid chain: Leucine--tRNA ligase (868 aa).

A 'HIGH' region motif is present at residues 42 to 52 (PYPSGKLHMGH). Positions 624 to 628 (TMSKS) match the 'KMSKS' region motif. K627 serves as a coordination point for ATP.

This sequence belongs to the class-I aminoacyl-tRNA synthetase family.

It localises to the cytoplasm. It catalyses the reaction tRNA(Leu) + L-leucine + ATP = L-leucyl-tRNA(Leu) + AMP + diphosphate. The polypeptide is Leucine--tRNA ligase (Nitrosomonas eutropha (strain DSM 101675 / C91 / Nm57)).